The following is a 214-amino-acid chain: Small ribosomal subunit protein uS3 (214 aa).

The 69-residue stretch at 39 to 107 (IRAYLLKKPA…EVWVAVEEVK (69 aa)) folds into the KH type-2 domain.

This sequence belongs to the universal ribosomal protein uS3 family. As to quaternary structure, part of the 30S ribosomal subunit. Forms a tight complex with proteins S10 and S14.

In terms of biological role, binds the lower part of the 30S subunit head. Binds mRNA in the 70S ribosome, positioning it for translation. The protein is Small ribosomal subunit protein uS3 of Protochlamydia amoebophila (strain UWE25).